A 145-amino-acid chain; its full sequence is UPF0260 protein VV2402 (145 aa).

It belongs to the UPF0260 family.

This is UPF0260 protein VV2402 from Vibrio vulnificus (strain YJ016).